The following is a 419-amino-acid chain: Pregnancy-specific beta-1-glycoprotein 4 (419 aa).

A signal peptide spans 1–34 (MGPLSAPPCTQRITWKGVLLTASLLNFWNPPTTA). The Ig-like V-type domain occupies 35-144 (QVTIEAQPPK…TGHFTFTLHL (110 aa)). Asn104, Asn111, Asn199, Asn268, Asn299, and Asn303 each carry an N-linked (GlcNAc...) asparagine glycan. 3 consecutive Ig-like C2-type domains span residues 147 to 234 (PKPS…VTLN), 237 to 327 (PKLS…VTLN), and 332 to 410 (PDLP…KSIT). Intrachain disulfides connect Cys169–Cys217, Cys262–Cys310, and Cys354–Cys394.

It belongs to the immunoglobulin superfamily. CEA family.

The protein resides in the secreted. The chain is Pregnancy-specific beta-1-glycoprotein 4 (PSG4) from Homo sapiens (Human).